A 154-amino-acid chain; its full sequence is Ribosome maturation factor RimP (154 aa).

This sequence belongs to the RimP family.

The protein localises to the cytoplasm. Functionally, required for maturation of 30S ribosomal subunits. This is Ribosome maturation factor RimP from Clostridium kluyveri (strain ATCC 8527 / DSM 555 / NBRC 12016 / NCIMB 10680 / K1).